The chain runs to 154 residues: MVKEAVKIVAQNKKARHDYFIEETIEAGIVLSGTEVKSVRQGKLNLKESYASIVEGEVIVSGMHISPYEQGNIFNKDPLRDRKLLLHKSEINRLIGLTQQKGYTLVPVQAYLKRGMVKIELGVARGKKLYDKRDDIAARDAKREIDRKMKEQLR.

Belongs to the SmpB family.

Its subcellular location is the cytoplasm. In terms of biological role, required for rescue of stalled ribosomes mediated by trans-translation. Binds to transfer-messenger RNA (tmRNA), required for stable association of tmRNA with ribosomes. tmRNA and SmpB together mimic tRNA shape, replacing the anticodon stem-loop with SmpB. tmRNA is encoded by the ssrA gene; the 2 termini fold to resemble tRNA(Ala) and it encodes a 'tag peptide', a short internal open reading frame. During trans-translation Ala-aminoacylated tmRNA acts like a tRNA, entering the A-site of stalled ribosomes, displacing the stalled mRNA. The ribosome then switches to translate the ORF on the tmRNA; the nascent peptide is terminated with the 'tag peptide' encoded by the tmRNA and targeted for degradation. The ribosome is freed to recommence translation, which seems to be the essential function of trans-translation. This chain is SsrA-binding protein, found in Ruminiclostridium cellulolyticum (strain ATCC 35319 / DSM 5812 / JCM 6584 / H10) (Clostridium cellulolyticum).